A 280-amino-acid chain; its full sequence is Orotidine 5'-phosphate decarboxylase (280 aa).

The Proton donor role is filled by K97.

It belongs to the OMP decarboxylase family. Type 2 subfamily.

The enzyme catalyses orotidine 5'-phosphate + H(+) = UMP + CO2. It participates in pyrimidine metabolism; UMP biosynthesis via de novo pathway; UMP from orotate: step 2/2. This chain is Orotidine 5'-phosphate decarboxylase (pyrF), found in Corynebacterium efficiens (strain DSM 44549 / YS-314 / AJ 12310 / JCM 11189 / NBRC 100395).